The primary structure comprises 291 residues: BTB/POZ domain-containing protein 19 (291 aa).

The 70-residue stretch at 29–98 (SDVRFVVGQE…LYTNSAKLQR (70 aa)) folds into the BTB domain. One can recognise a BACK domain in the interval 134 to 234 (CEALQVAVTF…LALLAPAELS (101 aa)).

The protein is BTB/POZ domain-containing protein 19 (BTBD19) of Bos taurus (Bovine).